Reading from the N-terminus, the 156-residue chain is Maintenance of carboxysome distribution protein B (156 aa).

Residues 1 to 55 are required for interaction with McdA:DNA complex; it reads MSNNALDRLINKQKPKVPPRNDVVSESVSNDIKTQGQQELNTSLPPSDTKATPEE. The interval 1–79 is disordered; the sequence is MSNNALDRLI…QKPKLSPDTF (79 aa). Positions 24–50 are enriched in polar residues; it reads VSESVSNDIKTQGQQELNTSLPPSDTK. Basic and acidic residues predominate over residues 51–63; sequence ATPEEMPTSHESE. The stretch at 122 to 156 forms a coiled coil; that stretch reads PEELAQVIQLAQERLSQRKAIADYKRAKTMQERFL.

In terms of assembly, homodimerizes; may exist in higher order oligomers in solution. Forms a complex with McdA:DNA. Homohexamerizes, interacts with shell components of the carboxysome.

It is found in the carboxysome. In terms of biological role, mcdA and McdB together mediate carboxysome (Cb) spacing, size, ultrastructure and probably inheritance in the cell, together they prevent Cb aggregation. McdA is an ATPase that forms dynamic gradients on the nucleoid in response to adapter protein McdB, which associates with carboxysomes. The interplay between McdA gradients on the nucleoid and McdB-bound carboxysomes result in the equal spacing of Cbs along the cell length. Stimulates the ATPase activity of McdA, causing McdA to be released from DNA. Undergoes liquid-liquid phase separation. Incorrect positioning (aggregation) of carboxysomes results in reduced CO(2) fixation by encapsulated ribulose-1,5-bisphosphate carboxylase (RuBisCO, cbbL/cbbS), which leads to slower growth. The sequence is that of Maintenance of carboxysome distribution protein B from Gloeothece citriformis (strain PCC 7424) (Cyanothece sp. (strain PCC 7424)).